The sequence spans 531 residues: Maturase K (531 aa).

Belongs to the intron maturase 2 family. MatK subfamily.

It localises to the plastid. It is found in the chloroplast. Functionally, usually encoded in the trnK tRNA gene intron. Probably assists in splicing its own and other chloroplast group II introns. This is Maturase K from Ephedra sinica (Chinese ephedra).